A 226-amino-acid chain; its full sequence is ATP synthase subunit a (226 aa).

The next 6 helical transmembrane spans lie at 22-42, 73-93, 102-122, 135-155, 173-193, and 202-222; these read SMNWLFMMLPIIIFPSIFWLI, IIIFISLMLYIMITNIFSLIP, LLLNMILSLTLWFSFLIYLIY, LNSPVFLMNFMVIIELISLII, LILTLLGIFISNFISILPINL, and LEIFMSMIQSYVFSILLILYF.

Belongs to the ATPase A chain family. F-type ATPases have 2 components, CF(1) - the catalytic core - and CF(0) - the membrane proton channel. CF(1) has five subunits: alpha(3), beta(3), gamma(1), delta(1), epsilon(1). CF(0) has three main subunits: a, b and c.

The protein resides in the mitochondrion inner membrane. Its function is as follows. Mitochondrial membrane ATP synthase (F(1)F(0) ATP synthase or Complex V) produces ATP from ADP in the presence of a proton gradient across the membrane which is generated by electron transport complexes of the respiratory chain. F-type ATPases consist of two structural domains, F(1) - containing the extramembraneous catalytic core and F(0) - containing the membrane proton channel, linked together by a central stalk and a peripheral stalk. During catalysis, ATP synthesis in the catalytic domain of F(1) is coupled via a rotary mechanism of the central stalk subunits to proton translocation. Key component of the proton channel; it may play a direct role in the translocation of protons across the membrane. The polypeptide is ATP synthase subunit a (ATP6) (Apis mellifera ligustica (Common honeybee)).